A 592-amino-acid chain; its full sequence is Guanylate-binding protein 1 (592 aa).

The tract at residues 1 to 311 (MASEIHMTGP…NAISSGDLPC (311 aa)) is GTPase domain (Globular). The 244-residue stretch at 35–278 (TQPMVVVAIV…FCSYIFSNSK (244 aa)) folds into the GB1/RHD3-type G domain. GTP contacts are provided by residues 45–52 (GLYRTGKS), 67–69 (LGS), and 97–101 (DTEGL). Residue Ser156 is modified to Phosphoserine; by PIM1. Residues Lys207, Lys209, Lys210, Lys382, Lys562, Lys567, Lys573, and Lys587 each participate in a (Microbial infection) Glycyl lysine isopeptide (Lys-Gly) (interchain with G-Cter in ubiquitin) cross-link. Cys589 carries the post-translational modification Cysteine methyl ester. Cys589 is lipidated: S-farnesyl cysteine. Phosphothreonine; by PIM1 is present on Thr590. The propeptide at 590 to 592 (TIS) is removed in mature form.

The protein belongs to the TRAFAC class dynamin-like GTPase superfamily. GB1/RHD3 GTPase family. GB1 subfamily. Homodimer; homodimerization occurs upon GTP-binding and is required for the second hydrolysis step from GDP to GMP. Undergoes conformational changes and oligomerization upon GTP-binding and hydrolysis. Heterodimer with other family members, including GBP2, GBP3, GBP4 and GBP5. Dimerization regulates subcellular location to membranous structures. Interacts with SQSTM1. Interacts (when phosphorylated) with 14-3-3 protein sigma (SFN); leading to GBP1 retention in the cytosol and inactivation. Isoprenylation is required for proper subcellular location. In terms of processing, phosphorylated at Ser-156 by PIM1 in absence of infection, inhibits GBP1: phosphorylation promotes interaction with 14-3-3 protein sigma (SFN), leading to GBP1 retention in the cytosol. Dephosphorylated in response to infection, liberating GBP1. Post-translationally, (Microbial infection) Ubiquitinated by S.flexneri IpaH9.8, leading to its degradation by the proteasome, thereby preventing its ability to promote host defense against bacterial infection.

The protein resides in the cytoplasmic vesicle membrane. It localises to the golgi apparatus membrane. The protein localises to the cell membrane. It is found in the cytoplasm. Its subcellular location is the cytosol. The protein resides in the secreted. It carries out the reaction GTP + H2O = GDP + phosphate + H(+). The catalysed reaction is GDP + H2O = GMP + phosphate + H(+). In terms of biological role, interferon (IFN)-inducible GTPase that plays important roles in innate immunity against a diverse range of bacterial, viral and protozoan pathogens. Hydrolyzes GTP to GMP in two consecutive cleavage reactions: GTP is first hydrolyzed to GDP and then to GMP in a processive manner. Following infection, recruited to the pathogen-containing vacuoles or vacuole-escaped bacteria and promotes both inflammasome assembly and autophagy. Acts as a positive regulator of inflammasome assembly by facilitating the detection of inflammasome ligands from pathogens. Involved in the lysis of pathogen-containing vacuoles, releasing pathogens into the cytosol. Following pathogen release in the cytosol, forms a protein coat in a GTPase-dependent manner that encapsulates pathogens and promotes the detection of ligands by pattern recognition receptors. Plays a key role in inflammasome assembly in response to infection by Gram-negative bacteria: following pathogen release in the cytosol, forms a protein coat that encapsulates Gram-negative bacteria and directly binds to lipopolysaccharide (LPS), disrupting the O-antigen barrier and unmasking lipid A that is that detected by the non-canonical inflammasome effector CASP4/CASP11. Also promotes recruitment of proteins that mediate bacterial cytolysis, leading to release double-stranded DNA (dsDNA) that activates the AIM2 inflammasome. Involved in autophagy by regulating bacteriolytic peptide generation via its interaction with ubiquitin-binding protein SQSTM1, which delivers monoubiquitinated proteins to autolysosomes for the generation of bacteriolytic peptides. Confers protection to several pathogens, including the bacterial pathogens L.monocytogenes and M.bovis BCG as well as the protozoan pathogen T.gondii. Exhibits antiviral activity against influenza virus. This is Guanylate-binding protein 1 from Homo sapiens (Human).